The sequence spans 577 residues: (E)-beta-farnesene synthase (577 aa).

Mg(2+)-binding residues include Asp-327, Asp-331, Asp-474, Ser-478, and Glu-482. A DDXXD motif motif is present at residues 327 to 331 (DDTFD).

The protein belongs to the terpene synthase family. Mg(2+) serves as cofactor. Requires Co(2+) as cofactor. It depends on Mn(2+) as a cofactor. As to expression, expressed in flowers.

It localises to the cytoplasm. The catalysed reaction is (2E,6E)-farnesyl diphosphate = (E)-beta-farnesene + diphosphate. The protein operates within secondary metabolite biosynthesis; terpenoid biosynthesis. With respect to regulation, strongly inhibited by manganese at concentration higher than 20 uM. In terms of biological role, sesquiterpene cyclase catalyzing the production of beta-farnesene from farnesyl diphosphate. Unable to use geranyl diphosphate as substrate. The chain is (E)-beta-farnesene synthase (CASC125) from Artemisia annua (Sweet wormwood).